Consider the following 169-residue polypeptide: UPF0303 protein BOV_1367 (169 aa).

Belongs to the UPF0303 family.

The polypeptide is UPF0303 protein BOV_1367 (Brucella ovis (strain ATCC 25840 / 63/290 / NCTC 10512)).